The chain runs to 436 residues: Proteasome-activating nucleotidase (436 aa).

The stretch at 15–97 (EELCRLYRSL…LKSESEQLRS (83 aa)) forms a coiled coil. ATP-binding positions include 222–227 (GTGKTL) and histidine 361. Residues 434-436 (MFA) form a docks into pockets in the proteasome alpha-ring to cause gate opening region.

It belongs to the AAA ATPase family. In terms of assembly, homohexamer. The hexameric complex has a two-ring architecture resembling a top hat that caps the 20S proteasome core at one or both ends. Upon ATP-binding, the C-terminus of PAN interacts with the alpha-rings of the proteasome core by binding to the intersubunit pockets.

The protein resides in the cytoplasm. Its function is as follows. ATPase which is responsible for recognizing, binding, unfolding and translocation of substrate proteins into the archaeal 20S proteasome core particle. Is essential for opening the gate of the 20S proteasome via an interaction with its C-terminus, thereby allowing substrate entry and access to the site of proteolysis. Thus, the C-termini of the proteasomal ATPase function like a 'key in a lock' to induce gate opening and therefore regulate proteolysis. Unfolding activity requires energy from ATP hydrolysis, whereas ATP binding alone promotes ATPase-20S proteasome association which triggers gate opening, and supports translocation of unfolded substrates. This chain is Proteasome-activating nucleotidase, found in Methanoregula boonei (strain DSM 21154 / JCM 14090 / 6A8).